The following is a 66-amino-acid chain: Large ribosomal subunit protein bL35 (66 aa).

Composition is skewed to basic residues over residues 1–15 and 28–45; these read MPKL…KRFK and TKRH…RTRR. Positions 1–49 are disordered; the sequence is MPKLKTKSSAKKRFKVTASGRVMSAQSTKRHGMTKRSKRSLRTRRGIAQ.

It belongs to the bacterial ribosomal protein bL35 family.

This Anaplasma marginale (strain Florida) protein is Large ribosomal subunit protein bL35.